The sequence spans 616 residues: 1-deoxy-D-xylulose-5-phosphate synthase (616 aa).

Thiamine diphosphate contacts are provided by residues His-74 and 115–117 (GHS). Asp-146 is a Mg(2+) binding site. Residues 147–148 (GA), Asn-175, Tyr-282, and Glu-365 each bind thiamine diphosphate. Mg(2+) is bound at residue Asn-175.

This sequence belongs to the transketolase family. DXPS subfamily. As to quaternary structure, homodimer. It depends on Mg(2+) as a cofactor. Thiamine diphosphate serves as cofactor.

The catalysed reaction is D-glyceraldehyde 3-phosphate + pyruvate + H(+) = 1-deoxy-D-xylulose 5-phosphate + CO2. The protein operates within metabolic intermediate biosynthesis; 1-deoxy-D-xylulose 5-phosphate biosynthesis; 1-deoxy-D-xylulose 5-phosphate from D-glyceraldehyde 3-phosphate and pyruvate: step 1/1. Catalyzes the acyloin condensation reaction between C atoms 2 and 3 of pyruvate and glyceraldehyde 3-phosphate to yield 1-deoxy-D-xylulose-5-phosphate (DXP). The polypeptide is 1-deoxy-D-xylulose-5-phosphate synthase (Chromobacterium violaceum (strain ATCC 12472 / DSM 30191 / JCM 1249 / CCUG 213 / NBRC 12614 / NCIMB 9131 / NCTC 9757 / MK)).